The following is a 180-amino-acid chain: MNNQLHATTIFAIRHNGRAAMSGDGQVTLGQQVIMKQTARKVRRLFNDEVVAGFAGSVADAFTLFEMFEAKLYEYNGNLSRAAVELAKEWRGDKMLRQLEAMLIVMNKDELLVVSGTGEVIQPDDDIIAIGSGGNYALSAGRALKRHASTLSARDIAQASLETAADICVFTNHNIIIEEI.

Residue threonine 8 is part of the active site. The Na(+) site is built by alanine 165, cysteine 168, and threonine 171.

Belongs to the peptidase T1B family. HslV subfamily. As to quaternary structure, a double ring-shaped homohexamer of HslV is capped on each side by a ring-shaped HslU homohexamer. The assembly of the HslU/HslV complex is dependent on binding of ATP.

The protein resides in the cytoplasm. The catalysed reaction is ATP-dependent cleavage of peptide bonds with broad specificity.. Allosterically activated by HslU binding. Protease subunit of a proteasome-like degradation complex believed to be a general protein degrading machinery. This Macrococcus caseolyticus (strain JCSC5402) (Macrococcoides caseolyticum) protein is ATP-dependent protease subunit HslV.